Reading from the N-terminus, the 350-residue chain is Biotin synthase (350 aa).

In terms of domain architecture, Radical SAM core spans 54 to 278 (REIQLSTLLS…TMPQSYVRLS (225 aa)). The [4Fe-4S] cluster site is built by C69, C73, and C76. 4 residues coordinate [2Fe-2S] cluster: C113, C144, C204, and R276.

It belongs to the radical SAM superfamily. Biotin synthase family. In terms of assembly, homodimer. The cofactor is [4Fe-4S] cluster. [2Fe-2S] cluster serves as cofactor.

It carries out the reaction (4R,5S)-dethiobiotin + (sulfur carrier)-SH + 2 reduced [2Fe-2S]-[ferredoxin] + 2 S-adenosyl-L-methionine = (sulfur carrier)-H + biotin + 2 5'-deoxyadenosine + 2 L-methionine + 2 oxidized [2Fe-2S]-[ferredoxin]. It participates in cofactor biosynthesis; biotin biosynthesis; biotin from 7,8-diaminononanoate: step 2/2. In terms of biological role, catalyzes the conversion of dethiobiotin (DTB) to biotin by the insertion of a sulfur atom into dethiobiotin via a radical-based mechanism. The polypeptide is Biotin synthase (Neisseria gonorrhoeae (strain ATCC 700825 / FA 1090)).